A 579-amino-acid chain; its full sequence is UPF0324 membrane protein DVU_2133 (579 aa).

A run of 11 helical transmembrane segments spans residues 26 to 45 (YWAIWLGFVILIAGMWLFLA), 193 to 215 (PFNIATSLPMLMVALGLFFAVGM), 225 to 243 (FLVGFIGVFFVAVLALMMG), 250 to 272 (YWGIGAEAWAIIIGMLVANTVGT), 305 to 327 (IGIPGIFVAWVVTPIVLICTFIF), 369 to 391 (LTLAIGLSLVFTAIMMIAMPAFI), 401 to 423 (GGAWMGGTIDATGAVAAAGAFLG), 436 to 456 (IQNVLIGVVAFGVAVYWCARV), 476 to 495 (FVLGFLAASVLFSVISGSLG), 515 to 534 (LRNWFFCLAFTSIGLATNFR), and 549 to 571 (YVAGQSFNLVLTLAMAYVMFYIV).

Belongs to the UPF0324 family.

The protein resides in the cell membrane. This Nitratidesulfovibrio vulgaris (strain ATCC 29579 / DSM 644 / CCUG 34227 / NCIMB 8303 / VKM B-1760 / Hildenborough) (Desulfovibrio vulgaris) protein is UPF0324 membrane protein DVU_2133.